Reading from the N-terminus, the 425-residue chain is 5-methylthioadenosine/S-adenosylhomocysteine deaminase (425 aa).

2 residues coordinate Zn(2+): histidine 63 and histidine 65. Substrate contacts are provided by glutamate 92 and histidine 184. Residue histidine 211 participates in Zn(2+) binding. Residues glutamate 214 and aspartate 299 each coordinate substrate. Aspartate 299 contributes to the Zn(2+) binding site.

The protein belongs to the metallo-dependent hydrolases superfamily. MTA/SAH deaminase family. Zn(2+) is required as a cofactor.

It catalyses the reaction S-adenosyl-L-homocysteine + H2O + H(+) = S-inosyl-L-homocysteine + NH4(+). The enzyme catalyses S-methyl-5'-thioadenosine + H2O + H(+) = S-methyl-5'-thioinosine + NH4(+). In terms of biological role, catalyzes the deamination of 5-methylthioadenosine and S-adenosyl-L-homocysteine into 5-methylthioinosine and S-inosyl-L-homocysteine, respectively. Is also able to deaminate adenosine. This is 5-methylthioadenosine/S-adenosylhomocysteine deaminase from Pyrococcus abyssi (strain GE5 / Orsay).